The following is a 265-amino-acid chain: 2-Cys peroxiredoxin BAS1, chloroplastic (265 aa).

The N-terminal 65 residues, 1–65 (MACVASSTTL…SSTSRRSFAV (65 aa)), are a transit peptide targeting the chloroplast. The Thioredoxin domain occupies 73-232 (PLVGNKAPDF…TMRTLQALQY (160 aa)). Cys119 serves as the catalytic Cysteine sulfenic acid (-SOH) intermediate.

The protein belongs to the peroxiredoxin family. AhpC/Prx1 subfamily. Homodimer; disulfide-linked, upon oxidation.

Its subcellular location is the plastid. It is found in the chloroplast. The enzyme catalyses a hydroperoxide + [thioredoxin]-dithiol = an alcohol + [thioredoxin]-disulfide + H2O. In terms of biological role, thiol-specific peroxidase that catalyzes the reduction of hydrogen peroxide and organic hydroperoxides to water and alcohols, respectively. Plays a role in cell protection against oxidative stress by detoxifying peroxides. May be an antioxidant enzyme particularly in the developing shoot and photosynthesizing leaf. In Spinacia oleracea (Spinach), this protein is 2-Cys peroxiredoxin BAS1, chloroplastic (BAS1).